We begin with the raw amino-acid sequence, 236 residues long: Protein YIPF6 (236 aa).

N-acetylalanine is present on Ala2. Residues 2 to 84 (AEAEESPGDP…HVLYPRKSNT (83 aa)) are Cytoplasmic-facing. Position 7 is a phosphoserine (Ser7). Residues 85–105 (LLRDWDLWGPLILCVTLALML) traverse the membrane as a helical segment. The Lumenal segment spans residues 106-115 (QRDSADSEKD). The helical transmembrane segment at 116–136 (GGPQFAEVFVIVWFGAVTITL) threads the bilayer. Over 137 to 146 (NSKLLGGNIS) the chain is Cytoplasmic. A helical membrane pass occupies residues 147-167 (FFQSLCVLGYCILPLTVAMLI). Over 168-184 (CRLVLLADPGPVNFMVR) the chain is Lumenal. The chain crosses the membrane as a helical span at residues 185–205 (LFVVIVMFAWSIVASTAFLAD). Residues 206–212 (SQPPNRR) are Cytoplasmic-facing. The helical transmembrane segment at 213–233 (ALAVYPVFLFYFVISWMILTF) threads the bilayer. Topologically, residues 234-236 (TPQ) are lumenal.

The protein belongs to the YIP1 family. Predominantly interacts with YIPF1 or YIPF2, but may also form a ternary complex with YIPF1 and YIPF2. This interaction may stabilize YIPF1 and YIPF2.

The protein localises to the golgi apparatus membrane. May be required for stable YIPF1 and YIPF2 protein expression. The polypeptide is Protein YIPF6 (YIPF6) (Homo sapiens (Human)).